Here is a 376-residue protein sequence, read N- to C-terminus: Sterol 24-C-methyltransferase (376 aa).

The protein belongs to the class I-like SAM-binding methyltransferase superfamily. Erg6/SMT family.

The catalysed reaction is zymosterol + S-adenosyl-L-methionine = fecosterol + S-adenosyl-L-homocysteine + H(+). Its pathway is steroid metabolism; ergosterol biosynthesis; ergosterol from zymosterol: step 1/5. With respect to regulation, substrate analogs 25-azalanosterol and 24(R,S),25-epiminolanosterol act as inhibitors. Sterol 24-C-methyltransferase; part of the third module of ergosterol biosynthesis pathway that includes the late steps of the pathway. ERG6 catalyzes the methyl transfer from S-adenosyl-methionine to the C-24 of zymosterol to form fecosterol. The third module or late pathway involves the ergosterol synthesis itself through consecutive reactions that mainly occur in the endoplasmic reticulum (ER) membrane. Firstly, the squalene synthase ERG9 catalyzes the condensation of 2 farnesyl pyrophosphate moieties to form squalene, which is the precursor of all steroids. Squalene synthase is crucial for balancing the incorporation of farnesyl diphosphate (FPP) into sterol and nonsterol isoprene synthesis. Secondly, the squalene epoxidase ERG1 catalyzes the stereospecific oxidation of squalene to (S)-2,3-epoxysqualene, which is considered to be a rate-limiting enzyme in steroid biosynthesis. Then, the lanosterol synthase ERG7 catalyzes the cyclization of (S)-2,3 oxidosqualene to lanosterol, a reaction that forms the sterol core. In the next steps, lanosterol is transformed to zymosterol through a complex process involving various demethylation, reduction and desaturation reactions. The lanosterol 14-alpha-demethylase ERG11 (also known as CYP51) catalyzes C14-demethylation of lanosterol to produce 4,4'-dimethyl cholesta-8,14,24-triene-3-beta-ol, which is critical for ergosterol biosynthesis. The C-14 reductase ERG24 reduces the C14=C15 double bond of 4,4-dimethyl-cholesta-8,14,24-trienol to produce 4,4-dimethyl-cholesta-8,24-dienol. 4,4-dimethyl-cholesta-8,24-dienol is substrate of the C-4 demethylation complex ERG25-ERG26-ERG27 in which ERG25 catalyzes the three-step monooxygenation required for the demethylation of 4,4-dimethyl and 4alpha-methylsterols, ERG26 catalyzes the oxidative decarboxylation that results in a reduction of the 3-beta-hydroxy group at the C-3 carbon to an oxo group, and ERG27 is responsible for the reduction of the keto group on the C-3. ERG28 has a role as a scaffold to help anchor ERG25, ERG26 and ERG27 to the endoplasmic reticulum and ERG29 regulates the activity of the iron-containing C4-methylsterol oxidase ERG25. Then, the sterol 24-C-methyltransferase ERG6 catalyzes the methyl transfer from S-adenosyl-methionine to the C-24 of zymosterol to form fecosterol. The C-8 sterol isomerase ERG2 catalyzes the reaction which results in unsaturation at C-7 in the B ring of sterols and thus converts fecosterol to episterol. The sterol-C5-desaturase ERG3 then catalyzes the introduction of a C-5 double bond in the B ring to produce 5-dehydroepisterol. The C-22 sterol desaturase ERG5 further converts 5-dehydroepisterol into ergosta-5,7,22,24(28)-tetraen-3beta-ol by forming the C-22(23) double bond in the sterol side chain. Finally, ergosta-5,7,22,24(28)-tetraen-3beta-ol is substrate of the C-24(28) sterol reductase ERG4 to produce ergosterol. This is Sterol 24-C-methyltransferase from Candida albicans (strain SC5314 / ATCC MYA-2876) (Yeast).